The following is a 444-amino-acid chain: UDP-N-acetylmuramoylalanine--D-glutamate ligase (444 aa).

Position 118–124 (118–124 (GTNGKTT)) interacts with ATP.

It belongs to the MurCDEF family.

The protein localises to the cytoplasm. The enzyme catalyses UDP-N-acetyl-alpha-D-muramoyl-L-alanine + D-glutamate + ATP = UDP-N-acetyl-alpha-D-muramoyl-L-alanyl-D-glutamate + ADP + phosphate + H(+). It participates in cell wall biogenesis; peptidoglycan biosynthesis. Cell wall formation. Catalyzes the addition of glutamate to the nucleotide precursor UDP-N-acetylmuramoyl-L-alanine (UMA). This is UDP-N-acetylmuramoylalanine--D-glutamate ligase from Protochlamydia amoebophila (strain UWE25).